We begin with the raw amino-acid sequence, 311 residues long: Ribosomal RNA small subunit methyltransferase H (311 aa).

S-adenosyl-L-methionine is bound by residues 32–34 (AGH), Asp-52, Phe-79, Asp-100, and Gln-107.

The protein belongs to the methyltransferase superfamily. RsmH family.

The protein localises to the cytoplasm. The catalysed reaction is cytidine(1402) in 16S rRNA + S-adenosyl-L-methionine = N(4)-methylcytidine(1402) in 16S rRNA + S-adenosyl-L-homocysteine + H(+). Its function is as follows. Specifically methylates the N4 position of cytidine in position 1402 (C1402) of 16S rRNA. This chain is Ribosomal RNA small subunit methyltransferase H, found in Staphylococcus haemolyticus (strain JCSC1435).